Here is a 327-residue protein sequence, read N- to C-terminus: Serine/threonine-protein phosphatase PP2A catalytic subunit (327 aa).

Mn(2+) is bound by residues Asp-75, His-77, Asp-103, and Asn-135. His-136 functions as the Proton donor in the catalytic mechanism. Mn(2+) contacts are provided by His-185 and His-259. The residue at position 327 (Leu-327) is a Leucine methyl ester.

This sequence belongs to the PPP phosphatase family. PP-2A subfamily. Requires Mn(2+) as cofactor.

The enzyme catalyses O-phospho-L-seryl-[protein] + H2O = L-seryl-[protein] + phosphate. It carries out the reaction O-phospho-L-threonyl-[protein] + H2O = L-threonyl-[protein] + phosphate. The chain is Serine/threonine-protein phosphatase PP2A catalytic subunit (pph-1) from Neurospora crassa (strain ATCC 24698 / 74-OR23-1A / CBS 708.71 / DSM 1257 / FGSC 987).